We begin with the raw amino-acid sequence, 384 residues long: N-acetyldiaminopimelate deacetylase (384 aa).

D74 is a catalytic residue. The active-site Proton acceptor is the E133.

Belongs to the peptidase M20A family. N-acetyldiaminopimelate deacetylase subfamily.

The catalysed reaction is N-acetyl-(2S,6S)-2,6-diaminopimelate + H2O = (2S,6S)-2,6-diaminopimelate + acetate. It participates in amino-acid biosynthesis; L-lysine biosynthesis via DAP pathway; LL-2,6-diaminopimelate from (S)-tetrahydrodipicolinate (acetylase route): step 3/3. Functionally, catalyzes the conversion of N-acetyl-diaminopimelate to diaminopimelate and acetate. The protein is N-acetyldiaminopimelate deacetylase of Leuconostoc mesenteroides subsp. mesenteroides (strain ATCC 8293 / DSM 20343 / BCRC 11652 / CCM 1803 / JCM 6124 / NCDO 523 / NBRC 100496 / NCIMB 8023 / NCTC 12954 / NRRL B-1118 / 37Y).